Consider the following 414-residue polypeptide: FAD-dependent monooxygenase adaC (414 aa).

Residues Glu32, Ala43, Arg115, Asp325, and Gly338 each contribute to the FAD site.

The protein belongs to the paxM FAD-dependent monooxygenase family. FAD is required as a cofactor.

The enzyme catalyses 3-(2,4-dioxopentyl)-3,6,8,9-tetrahydroxy-1-oxo-1,2,3,4-tetrahydroanthracene-2-carboxyl-[ACP] + NADPH + O2 + H(+) = 3-(2,4-dioxopentyl)-2,3,6,8,9-pentahydroxy-1-oxo-1,2,3,4-tetrahydroanthracene-2-carboxyl-[ACP] + NADP(+) + H2O. It functions in the pathway secondary metabolite biosynthesis. Functionally, FAD-dependent monooxygenase; part of the gene cluster that mediates the biosynthesis of the linear tetracyclic TAN-1612 neuropeptide Y receptor antagonist. The decaketide backbone of TAN-1612 is synthesized by the non-reducing polyketide synthase adaA via condensation of one acetyl-CoA starter unit with 9 malonyl-CoA units. The FAD-dependent monooxygenase adaC then performs hydroxylation at C2 while the polaketide chain is still attached to the NRPKS adaA. The alpha-hydroxylation step at C2 appears to be crucial for the following C18-C1 Claisen cyclization and release of the C9-hydroxyl version of TAN-1612 from the NRPKS adaA, two steps performed by the lactamase-like protein adaB. Finally, the O-methyltransferase adaD performs the C9 O-methylation to complete the biosynthesis of TAN-1612. The chain is FAD-dependent monooxygenase adaC from Aspergillus niger (strain ATCC MYA-4892 / CBS 513.88 / FGSC A1513).